Reading from the N-terminus, the 110-residue chain is Large ribosomal subunit protein uL22 (110 aa).

This sequence belongs to the universal ribosomal protein uL22 family. Part of the 50S ribosomal subunit.

In terms of biological role, this protein binds specifically to 23S rRNA; its binding is stimulated by other ribosomal proteins, e.g. L4, L17, and L20. It is important during the early stages of 50S assembly. It makes multiple contacts with different domains of the 23S rRNA in the assembled 50S subunit and ribosome. Functionally, the globular domain of the protein is located near the polypeptide exit tunnel on the outside of the subunit, while an extended beta-hairpin is found that lines the wall of the exit tunnel in the center of the 70S ribosome. This is Large ribosomal subunit protein uL22 from Mycoplasma mobile (strain ATCC 43663 / 163K / NCTC 11711) (Mesomycoplasma mobile).